A 351-amino-acid polypeptide reads, in one-letter code: Heat-inducible transcription repressor HrcA (351 aa).

Belongs to the HrcA family.

Functionally, negative regulator of class I heat shock genes (grpE-dnaK-dnaJ and groELS operons). Prevents heat-shock induction of these operons. The sequence is that of Heat-inducible transcription repressor HrcA from Acetivibrio thermocellus (strain ATCC 27405 / DSM 1237 / JCM 9322 / NBRC 103400 / NCIMB 10682 / NRRL B-4536 / VPI 7372) (Clostridium thermocellum).